The following is a 171-amino-acid chain: Bursicon (171 aa).

Residues 1-31 (MISSPSTPATFAAGSLVLLCLVLGGGHFALA) form the signal peptide. Cystine bridges form between C47–C96, C61–C110, C71–C131, C75–C133, and C93–C136. The 91-residue stretch at 47–137 (CQVTPVIHVL…PLECMCRPCT (91 aa)) folds into the CTCK domain.

In terms of assembly, heterodimer of burs and pburs.

Its subcellular location is the secreted. In terms of biological role, final heterodimeric neurohormone released at the end of the molting cycle, involved in the sclerotization (tanning) of the insect cuticle, melanization and wing spreading. This chain is Bursicon, found in Culex pipiens pipiens (Northern house mosquito).